Here is a 153-residue protein sequence, read N- to C-terminus: Salivary C-type lectin 1 (153 aa).

Residues 1–19 (MIFSLYLIVAISLADLTAA) form the signal peptide. Positions 26-151 (KNRFCFPNVV…CSSTRRFVCE (126 aa)) constitute a C-type lectin domain. Cystine bridges form between cysteine 45/cysteine 150 and cysteine 122/cysteine 142.

Ca(2+) serves as cofactor. In terms of tissue distribution, expressed in female salivary gland. Not detected or low-level expression in female midgut and fat body.

The protein localises to the secreted. Functionally, salivary protein with carbohydrate-binding activity; exibits high affinity for D-mannose. Agglutinates host erythrocytes. Probably participates in mosquito innate immune responses to prevent microorganism multiplication in sugar and blood meals. Its function is as follows. (Microbial infection) Agglutinates Staphylococcus aureus in vitro. (Microbial infection) Agglutinates Candida albicans in vitro. In terms of biological role, (Microbial infection) Does not agglutinate Escherichia coli in vitro. This Aedes albopictus (Asian tiger mosquito) protein is Salivary C-type lectin 1.